Here is an 845-residue protein sequence, read N- to C-terminus: Alanine--tRNA ligase (845 aa).

Residues His552, His556, Cys653, and His657 each contribute to the Zn(2+) site.

This sequence belongs to the class-II aminoacyl-tRNA synthetase family. The cofactor is Zn(2+).

The protein resides in the cytoplasm. The catalysed reaction is tRNA(Ala) + L-alanine + ATP = L-alanyl-tRNA(Ala) + AMP + diphosphate. Its function is as follows. Catalyzes the attachment of alanine to tRNA(Ala) in a two-step reaction: alanine is first activated by ATP to form Ala-AMP and then transferred to the acceptor end of tRNA(Ala). Also edits incorrectly charged Ser-tRNA(Ala) and Gly-tRNA(Ala) via its editing domain. This chain is Alanine--tRNA ligase, found in Campylobacter fetus subsp. fetus (strain 82-40).